The sequence spans 143 residues: Sirohydrochlorin cobaltochelatase (143 aa).

His9 (proton acceptor) is an active-site residue. Position 9 (His9) interacts with Co(2+). His9 provides a ligand contact to Ni(2+). Substrate is bound by residues Glu45 and 70–75 (LAHGVH). His75 provides a ligand contact to Co(2+). Ni(2+) is bound at residue His75.

It belongs to the CbiX family. CbiXS subfamily. In terms of assembly, homotetramer; dimer of dimers.

It catalyses the reaction Co-sirohydrochlorin + 2 H(+) = sirohydrochlorin + Co(2+). The enzyme catalyses Ni-sirohydrochlorin + 2 H(+) = sirohydrochlorin + Ni(2+). The protein operates within cofactor biosynthesis; adenosylcobalamin biosynthesis; cob(II)yrinate a,c-diamide from sirohydrochlorin (anaerobic route): step 1/10. Catalyzes the insertion of Co(2+) into sirohydrochlorin as part of the anaerobic pathway to cobalamin biosynthesis. Involved in the biosynthesis of the unique nickel-containing tetrapyrrole coenzyme F430, the prosthetic group of methyl-coenzyme M reductase (MCR), which plays a key role in methanogenesis and anaerobic methane oxidation. Catalyzes the insertion of Ni(2+) into sirohydrochlorin to yield Ni-sirohydrochlorin. The protein is Sirohydrochlorin cobaltochelatase of Methanopyrus kandleri (strain AV19 / DSM 6324 / JCM 9639 / NBRC 100938).